A 255-amino-acid polypeptide reads, in one-letter code: Thiazole synthase (255 aa).

Residue Lys-96 is the Schiff-base intermediate with DXP of the active site. Residues Gly-157, 183 to 184 (AG), and 205 to 206 (NT) each bind 1-deoxy-D-xylulose 5-phosphate.

The protein belongs to the ThiG family. As to quaternary structure, homotetramer. Forms heterodimers with either ThiH or ThiS.

The protein localises to the cytoplasm. The enzyme catalyses [ThiS sulfur-carrier protein]-C-terminal-Gly-aminoethanethioate + 2-iminoacetate + 1-deoxy-D-xylulose 5-phosphate = [ThiS sulfur-carrier protein]-C-terminal Gly-Gly + 2-[(2R,5Z)-2-carboxy-4-methylthiazol-5(2H)-ylidene]ethyl phosphate + 2 H2O + H(+). The protein operates within cofactor biosynthesis; thiamine diphosphate biosynthesis. Catalyzes the rearrangement of 1-deoxy-D-xylulose 5-phosphate (DXP) to produce the thiazole phosphate moiety of thiamine. Sulfur is provided by the thiocarboxylate moiety of the carrier protein ThiS. In vitro, sulfur can be provided by H(2)S. In Staphylococcus saprophyticus subsp. saprophyticus (strain ATCC 15305 / DSM 20229 / NCIMB 8711 / NCTC 7292 / S-41), this protein is Thiazole synthase.